A 1029-amino-acid chain; its full sequence is MNGPTSQRAKRKQGSASSLDDRPPKHQRALNGAKQQSTGDNTPEEDMYDQGLDDEDLLAQALLPSVGPDTVEWQATIQKVVSNVVSIRFCQTCSFDTDAALTSEATGFVVDAERGYILTNRHVVGSGPFWGYCIFDNHEEVDAYPVYRDPVHDFGILKFDPKAIKYMPVAALPLRPDLAKVGVEIRVVGNDAGEKLSILSGVISRLDRNAPEYGEGYSDFNTCYYQASAAASGGSSGSPVVNIDGFAVALQAGGRADGASTDYFLPLDRPLRALQCLQQGKPITRGDIQCQFLLKPFDECRRLGLAPEWEAQMRKAFPKETNLLVAEIILPEGPSSNKVEEGDVLLKVNEELITEFIRLDDILDSNVGKPVKLLLQRGGEDVEVEVDVGDLHSITPDRFVSVAGGSFHSLSYQQARLYGVACKGVYVCEATGSFRFETSDNGWILQTIDNKKVPDLETFIQVVKNIPDKARVVVTYKHLRDLHTLNTTIIYVDRHWSSKMKLAVRNDDTGLWDFTDLADALPPVPPVPRKASFIQLEHTSHPAVAELVRSFVHVTCTMPMKLDGFPKNRKWGMGLVIDAEKGLVVISRAIVPYDLCDISITIGESIVVEGKVVFLHPLQNYAIIQYDPKLVDAPVQSAKLSSEEITQGASTYFIGYNRIGRVVHTATTVTEIFAVAIPANSGAPRYRAVNVDAITVDTNLSGQCGSGVLVAPDGTVQALWLTYLGERSPSTHRDEEYHLGLATPTLLPVVKQIQQGIVPKLRMLSVEFRSIQMAQARIMGVSEEWIQQVSLANTSHHQLFMVTKRTFERDQDENSGALLEGDILLTLNDKLITRISELDIMYSHEFLGAVIVRETKELKLKLPTVAADDVETDHAVSFCGAIFHRPHQAVRQQISKLYSEVYVSARTRGSPSYQYGLAPTNFITHVNGKRTPDLKTFLAAVTAIPDNTYFRLKAVTFDSVPWVVTMKKNEHYFPTVEWIKDSSEDCGWRRVTYEGGKAMEGEPSEGVPAVEEEAGGAVDDDVPMAAVEK.

A disordered region spans residues 1 to 49; the sequence is MNGPTSQRAKRKQGSASSLDDRPPKHQRALNGAKQQSTGDNTPEEDMYD. Residues 84–274 are serine protease; that stretch reads VVSIRFCQTC…LPLDRPLRAL (191 aa). Residues His-122, Asp-153, and Ser-235 each act as charge relay system in the active site. 2 consecutive PDZ domains span residues 307–379 and 845–958; these read PEWE…QRGG and EFLG…VTFD. Residues 997–1029 are disordered; it reads KAMEGEPSEGVPAVEEEAGGAVDDDVPMAAVEK. Acidic residues predominate over residues 1010–1022; it reads VEEEAGGAVDDDV.

Belongs to the peptidase S1C family.

The protein localises to the nucleus. Its function is as follows. Nuclear serine protease which mediates apoptosis. This is Pro-apoptotic serine protease NMA111 (NMA111) from Pyricularia oryzae (strain 70-15 / ATCC MYA-4617 / FGSC 8958) (Rice blast fungus).